A 567-amino-acid polypeptide reads, in one-letter code: DNA ligase B (567 aa).

K132 (N6-AMP-lysine intermediate) is an active-site residue.

The protein belongs to the NAD-dependent DNA ligase family. LigB subfamily.

The enzyme catalyses NAD(+) + (deoxyribonucleotide)n-3'-hydroxyl + 5'-phospho-(deoxyribonucleotide)m = (deoxyribonucleotide)n+m + AMP + beta-nicotinamide D-nucleotide.. Catalyzes the formation of phosphodiester linkages between 5'-phosphoryl and 3'-hydroxyl groups in double-stranded DNA using NAD as a coenzyme and as the energy source for the reaction. In Yersinia pestis, this protein is DNA ligase B.